Reading from the N-terminus, the 363-residue chain is MYGLTRSLLFQLSAERAHRLGMAGLHYLGRSRDLCESLREKALEGAPPGLAVEVAGLRFAHPVALAAGLDKDAEAVDGLFACGFSAVEIGTLTPRPQPGNPSPRLFRLPEHRALINRMGFNNHGATQAAARLRMQTWRPGPLGVNIGKNKDTPLEQAVDDYVACVDALAPLGDYVVVNASSPNTPGLRKLQEPEQLGQLLGAVQERLATVAPGKPLFLKIAPDLSPEAVDEVVDVARAQKLAGLIATNTTVARPFEHPLAKEAGGLSGAPVREPANAVIRRAWLRSGGALPIIGVGGVFTAQDVYEKLRAGASVVQVYTGFIYEGPGMVGNILPTLATLLARDGYKQVRDVIGAEHRKPGAPN.

FMN contacts are provided by residues 67-71 (AGLDK) and Thr91. Lys71 provides a ligand contact to substrate. 116–120 (NRMGF) provides a ligand contact to substrate. Residues Asn145 and Asn178 each coordinate FMN. Asn178 contributes to the substrate binding site. Ser181 (nucleophile) is an active-site residue. Asn183 contacts substrate. 2 residues coordinate FMN: Lys219 and Thr247. Position 248 to 249 (248 to 249 (NT)) interacts with substrate. Residues Gly268, Gly297, and 318–319 (YT) contribute to the FMN site.

This sequence belongs to the dihydroorotate dehydrogenase family. Type 2 subfamily. In terms of assembly, monomer. FMN serves as cofactor.

The protein localises to the cell membrane. The catalysed reaction is (S)-dihydroorotate + a quinone = orotate + a quinol. Its pathway is pyrimidine metabolism; UMP biosynthesis via de novo pathway; orotate from (S)-dihydroorotate (quinone route): step 1/1. Functionally, catalyzes the conversion of dihydroorotate to orotate with quinone as electron acceptor. This chain is Dihydroorotate dehydrogenase (quinone), found in Myxococcus xanthus (strain DK1622).